Here is a 568-residue protein sequence, read N- to C-terminus: Urease subunit alpha (568 aa).

Positions 131–568 constitute a Urease domain; it reads GGMDAHIHFI…LPLAQRYFLY (438 aa). 3 residues coordinate Ni(2+): H136, H138, and K219. At K219 the chain carries N6-carboxylysine. H221 is a substrate binding site. H248 and H274 together coordinate Ni(2+). H322 serves as the catalytic Proton donor. Ni(2+) is bound at residue D362.

Belongs to the metallo-dependent hydrolases superfamily. Urease alpha subunit family. Heterotrimer of UreA (gamma), UreB (beta) and UreC (alpha) subunits. Three heterotrimers associate to form the active enzyme. It depends on Ni cation as a cofactor. Carboxylation allows a single lysine to coordinate two nickel ions.

It is found in the cytoplasm. The enzyme catalyses urea + 2 H2O + H(+) = hydrogencarbonate + 2 NH4(+). The protein operates within nitrogen metabolism; urea degradation; CO(2) and NH(3) from urea (urease route): step 1/1. The chain is Urease subunit alpha from Cereibacter sphaeroides (strain ATCC 17025 / ATH 2.4.3) (Rhodobacter sphaeroides).